The chain runs to 102 residues: ATP-dependent Clp protease adapter protein ClpS (102 aa).

This sequence belongs to the ClpS family. In terms of assembly, binds to the N-terminal domain of the chaperone ClpA.

In terms of biological role, involved in the modulation of the specificity of the ClpAP-mediated ATP-dependent protein degradation. This is ATP-dependent Clp protease adapter protein ClpS from Aromatoleum aromaticum (strain DSM 19018 / LMG 30748 / EbN1) (Azoarcus sp. (strain EbN1)).